The sequence spans 585 residues: Protein DENND6B (585 aa).

A uDENN domain is found at 43-214 (ECVCVVTFDL…LPVMGVVVQV (172 aa)). The cDENN domain occupies 246–373 (VHELDLFRCF…VKLKKPSRLK (128 aa)). The dDENN domain maps to 375 to 499 (LDTKPGLYTA…KSPHFDGWYR (125 aa)).

This sequence belongs to the DENND6 family.

Its subcellular location is the recycling endosome. The protein resides in the cytoplasm. Guanine nucleotide exchange factor (GEF) for RAB14. Also has some, lesser GEF activity towards RAB35. The chain is Protein DENND6B (DENND6B) from Homo sapiens (Human).